A 289-amino-acid chain; its full sequence is MSTTSQTLTEAATSKFVRIKEGDLDLQLHYNDCGSGVETVVMLHGSGPGASGWANFNRNVEPLVAAGYRVVLMDCPGWSKSDPIVCSGSRSELNARALKGLLDAIGLDKVHIIGNSMGGHSAVAFALANPSRVGKLILMGGGTGGPSQFVPMPTEGIKLLQGLYREPTIDNLKKMMAVFVFDSSSLTEELYQARLDNMMSRRDHLENFVKSLAINPKQFTDYGPRLGEVTAPALVIWGRDDRFVPMDAGLRLIWGMPNAELHIFNRCGHWAQWEHADKFNRMVLDFLTH.

The AB hydrolase-1 domain occupies 39–275 (TVVMLHGSGP…RCGHWAQWEH (237 aa)). The active-site Proton acceptor is His-269.

This sequence belongs to the AB hydrolase superfamily. MhpC family. In terms of assembly, homodimer.

It catalyses the reaction (2Z,4E)-2-hydroxy-6-oxonona-2,4-dienedioate + H2O = (2Z)-2-hydroxypenta-2,4-dienoate + succinate + H(+). It carries out the reaction (2Z,4E,7E)-2-hydroxy-6-oxonona-2,4,7-trienedioate + H2O = (2Z)-2-hydroxypenta-2,4-dienoate + fumarate + H(+). It functions in the pathway aromatic compound metabolism; 3-phenylpropanoate degradation. In terms of biological role, catalyzes the cleavage of the C5-C6 bond of 2-hydroxy-6-oxononadienedioate and 2-hydroxy-6-oxononatrienedioate, a dienol ring fission product of the bacterial meta-cleavage pathway for degradation of phenylpropionic acid. The chain is 2-hydroxy-6-oxononadienedioate/2-hydroxy-6-oxononatrienedioate hydrolase 1 from Dechloromonas aromatica (strain RCB).